Here is a 475-residue protein sequence, read N- to C-terminus: 23S rRNA (uracil(1939)-C(5))-methyltransferase RlmD (475 aa).

The TRAM domain occupies 1–76 (MHRGDKPVNI…SRFSKAKVRE (76 aa)). [4Fe-4S] cluster-binding residues include Cys-89, Cys-95, Cys-98, and Cys-178. Residues Gln-299, Phe-328, Asn-333, Glu-349, Asp-377, and Asp-398 each contribute to the S-adenosyl-L-methionine site. Cys-431 functions as the Nucleophile in the catalytic mechanism.

This sequence belongs to the class I-like SAM-binding methyltransferase superfamily. RNA M5U methyltransferase family. RlmD subfamily.

It carries out the reaction uridine(1939) in 23S rRNA + S-adenosyl-L-methionine = 5-methyluridine(1939) in 23S rRNA + S-adenosyl-L-homocysteine + H(+). Functionally, catalyzes the formation of 5-methyl-uridine at position 1939 (m5U1939) in 23S rRNA. The protein is 23S rRNA (uracil(1939)-C(5))-methyltransferase RlmD of Polynucleobacter necessarius subsp. necessarius (strain STIR1).